A 1067-amino-acid chain; its full sequence is Receptor-type guanylate cyclase gcy-10 (1067 aa).

The first 20 residues, Met1–Gly20, serve as a signal peptide directing secretion. Over Ile21–Tyr438 the chain is Extracellular. N-linked (GlcNAc...) asparagine glycosylation is present at Asn411. Residues Ile439–Ile459 traverse the membrane as a helical segment. Residues Val460–Ala1067 are Cytoplasmic-facing. Residues Ala509 to Ser791 form the Protein kinase domain. ATP-binding positions include Arg515–Val523 and Lys534. Positions Thr859–Gln989 constitute a Guanylate cyclase domain.

The protein belongs to the adenylyl cyclase class-4/guanylyl cyclase family. In terms of tissue distribution, expressed predominantly in AWC but also in AWB, ASI, ASJ and ASK sensory neurons and in I1 interneuron.

It is found in the cell membrane. The protein resides in the cell projection. The protein localises to the cilium. The enzyme catalyses GTP = 3',5'-cyclic GMP + diphosphate. Guanylate cyclase involved in the production of the second messenger cGMP. Regulates chemotaxis responses toward volatile odorants in AWC sensory neurons and their avoidance in AWB sensory neurons. May be involved in sensitivity to quinine by regulating egl-4 activity through the production of cGMP. Involved in phototransduction in ASJ neurons downstream of G protein coupled-photoreceptor lite-1. Required to maintain the expression of putative olfactory receptor str-2 in AWC neurons in adults. In AWB and AWC sensory neurons, mediates the recognition of food oders which subsequently allows for the detection of preferred food sources. Involved in AWB sensory neuron development and extension during postembryonic development, potentially via mediating localization of tub-1 and PI(4,5)P2 to membrane cilia. The polypeptide is Receptor-type guanylate cyclase gcy-10 (Caenorhabditis elegans).